Reading from the N-terminus, the 425-residue chain is Enolase (425 aa).

Glutamine 165 contacts (2R)-2-phosphoglycerate. Glutamate 207 (proton donor) is an active-site residue. Mg(2+) contacts are provided by aspartate 244, glutamate 285, and aspartate 312. Residues lysine 337, arginine 366, serine 367, and lysine 388 each contribute to the (2R)-2-phosphoglycerate site. The active-site Proton acceptor is the lysine 337.

Belongs to the enolase family. Mg(2+) serves as cofactor.

It localises to the cytoplasm. The protein resides in the secreted. It is found in the cell surface. It catalyses the reaction (2R)-2-phosphoglycerate = phosphoenolpyruvate + H2O. It participates in carbohydrate degradation; glycolysis; pyruvate from D-glyceraldehyde 3-phosphate: step 4/5. Functionally, catalyzes the reversible conversion of 2-phosphoglycerate (2-PG) into phosphoenolpyruvate (PEP). It is essential for the degradation of carbohydrates via glycolysis. The sequence is that of Enolase from Wolbachia sp. subsp. Brugia malayi (strain TRS).